The following is a 153-amino-acid chain: Fimbrial protein EcpC (153 aa).

A propeptide spans 1–8 (MLKQVQKG) (leader sequence). An N-methylphenylalanine modification is found at phenylalanine 9. The chain crosses the membrane as a helical span at residues 9–29 (FTLIELMIVIAIIGILAAIAL). Cysteine 130 and cysteine 143 form a disulfide bridge.

The protein belongs to the N-Me-Phe pilin family.

Its subcellular location is the fimbrium. The protein localises to the membrane. The chain is Fimbrial protein EcpC (ecpC) from Eikenella corrodens.